The following is a 311-amino-acid chain: Lipid A biosynthesis acyltransferase (311 aa).

The chain crosses the membrane as a helical span at residues 19–39; that stretch reads WLFWLGVAIWRSILCLPYPIL. The HXXXXD motif motif lies at 134-139; it reads HFLTLE.

The protein belongs to the LpxL/LpxM/LpxP family.

Its subcellular location is the cell inner membrane. The catalysed reaction is an alpha-Kdo-(2-&gt;4)-alpha-Kdo-(2-&gt;6)-lipid IVA + a fatty acyl-[ACP] = an alpha-Kdo-(2-&gt;4)-alpha-Kdo-(2-&gt;6)-(acyl)-lipid IVA + holo-[ACP]. It participates in glycolipid biosynthesis; KDO(2)-lipid A biosynthesis; KDO(2)-lipid A from CMP-3-deoxy-D-manno-octulosonate and lipid IV(A): step 3/4. It functions in the pathway bacterial outer membrane biogenesis; lipopolysaccharide biosynthesis. Catalyzes the transfer of an acyl chain from an acyl-[acyl-carrier-protein] (ACP) to a Kdo(2)-lipid IV(A) to form a Kdo(2)-(acyl)-lipid IV(A). This chain is Lipid A biosynthesis acyltransferase, found in Haemophilus influenzae (strain ATCC 51907 / DSM 11121 / KW20 / Rd).